Here is a 397-residue protein sequence, read N- to C-terminus: 2-isopropylmalate synthase 1 (397 aa).

Residues 6–268 (VIVFDTTLRD…VHGINTKEIY (263 aa)) form the Pyruvate carboxyltransferase domain. 4 residues coordinate Mn(2+): D15, H203, H205, and N239.

The protein belongs to the alpha-IPM synthase/homocitrate synthase family. LeuA type 1 subfamily. In terms of assembly, homodimer. It depends on Mn(2+) as a cofactor.

It localises to the cytoplasm. It carries out the reaction 3-methyl-2-oxobutanoate + acetyl-CoA + H2O = (2S)-2-isopropylmalate + CoA + H(+). The protein operates within amino-acid biosynthesis; L-leucine biosynthesis; L-leucine from 3-methyl-2-oxobutanoate: step 1/4. Functionally, catalyzes the condensation of the acetyl group of acetyl-CoA with 3-methyl-2-oxobutanoate (2-ketoisovalerate) to form 3-carboxy-3-hydroxy-4-methylpentanoate (2-isopropylmalate). This is 2-isopropylmalate synthase 1 from Caldanaerobacter subterraneus subsp. tengcongensis (strain DSM 15242 / JCM 11007 / NBRC 100824 / MB4) (Thermoanaerobacter tengcongensis).